The following is a 101-amino-acid chain: Hg-scorpine-like-2 (101 aa).

A signal peptide spans 1 to 17 (MKLTILILLVITSFCSC). Residues 60 to 100 (QQLCMFNKDVAGWCEKSCQQSAHQKGYCHGTKCKCGIPLNY) form the BetaSPN-type CS-alpha/beta domain. 3 cysteine pairs are disulfide-bonded: C63/C87, C73/C92, and C77/C94.

The protein belongs to the long chain scorpion toxin family. Class 3 subfamily. As to expression, expressed by the venom gland.

Its subcellular location is the secreted. In terms of biological role, inhibits voltage-gated potassium channels. This is Hg-scorpine-like-2 from Hoffmannihadrurus gertschi (Scorpion).